A 219-amino-acid polypeptide reads, in one-letter code: Phosphatidylserine decarboxylase proenzyme (219 aa).

The active-site Schiff-base intermediate with substrate; via pyruvic acid is serine 188. Serine 188 is modified (pyruvic acid (Ser); by autocatalysis).

This sequence belongs to the phosphatidylserine decarboxylase family. PSD-A subfamily. In terms of assembly, heterodimer of a large membrane-associated beta subunit and a small pyruvoyl-containing alpha subunit. The cofactor is pyruvate. Is synthesized initially as an inactive proenzyme. Formation of the active enzyme involves a self-maturation process in which the active site pyruvoyl group is generated from an internal serine residue via an autocatalytic post-translational modification. Two non-identical subunits are generated from the proenzyme in this reaction, and the pyruvate is formed at the N-terminus of the alpha chain, which is derived from the carboxyl end of the proenzyme. The post-translation cleavage follows an unusual pathway, termed non-hydrolytic serinolysis, in which the side chain hydroxyl group of the serine supplies its oxygen atom to form the C-terminus of the beta chain, while the remainder of the serine residue undergoes an oxidative deamination to produce ammonia and the pyruvoyl prosthetic group on the alpha chain.

It localises to the cell membrane. It carries out the reaction a 1,2-diacyl-sn-glycero-3-phospho-L-serine + H(+) = a 1,2-diacyl-sn-glycero-3-phosphoethanolamine + CO2. It functions in the pathway phospholipid metabolism; phosphatidylethanolamine biosynthesis; phosphatidylethanolamine from CDP-diacylglycerol: step 2/2. Catalyzes the formation of phosphatidylethanolamine (PtdEtn) from phosphatidylserine (PtdSer). The chain is Phosphatidylserine decarboxylase proenzyme from Geobacter sp. (strain M21).